The primary structure comprises 347 residues: Sensor protein VraS (347 aa).

2 consecutive transmembrane segments (helical) span residues 13-33 (ILVY…VNIM) and 43-63 (IFGI…CIIV). The Histidine kinase domain maps to 150-341 (RLARELHDSV…RIEVKAPLNK (192 aa)).

It localises to the cell membrane. The catalysed reaction is ATP + protein L-histidine = ADP + protein N-phospho-L-histidine.. In terms of biological role, member of the two-component regulatory system VraS/VraR involved in the control of the cell wall peptidoglycan biosynthesis. Probably activates VraR by phosphorylation. The sequence is that of Sensor protein VraS (vraS) from Staphylococcus saprophyticus subsp. saprophyticus (strain ATCC 15305 / DSM 20229 / NCIMB 8711 / NCTC 7292 / S-41).